The primary structure comprises 110 residues: Large ribosomal subunit protein uL22 (110 aa).

The protein belongs to the universal ribosomal protein uL22 family. Part of the 50S ribosomal subunit.

In terms of biological role, this protein binds specifically to 23S rRNA; its binding is stimulated by other ribosomal proteins, e.g. L4, L17, and L20. It is important during the early stages of 50S assembly. It makes multiple contacts with different domains of the 23S rRNA in the assembled 50S subunit and ribosome. Functionally, the globular domain of the protein is located near the polypeptide exit tunnel on the outside of the subunit, while an extended beta-hairpin is found that lines the wall of the exit tunnel in the center of the 70S ribosome. The protein is Large ribosomal subunit protein uL22 of Yersinia pseudotuberculosis serotype O:1b (strain IP 31758).